We begin with the raw amino-acid sequence, 193 residues long: Protein GrpE (193 aa).

Basic and acidic residues predominate over residues 1–22; it reads MDPKEKEKMAEELNVEETKDTA. The interval 1 to 45 is disordered; sequence MDPKEKEKMAEELNVEETKDTAEEQPQDDQAEEAAPLTHEEQLEK. Over residues 23–32 the composition is skewed to acidic residues; it reads EEQPQDDQAE.

This sequence belongs to the GrpE family. As to quaternary structure, homodimer.

The protein resides in the cytoplasm. Functionally, participates actively in the response to hyperosmotic and heat shock by preventing the aggregation of stress-denatured proteins, in association with DnaK and GrpE. It is the nucleotide exchange factor for DnaK and may function as a thermosensor. Unfolded proteins bind initially to DnaJ; upon interaction with the DnaJ-bound protein, DnaK hydrolyzes its bound ATP, resulting in the formation of a stable complex. GrpE releases ADP from DnaK; ATP binding to DnaK triggers the release of the substrate protein, thus completing the reaction cycle. Several rounds of ATP-dependent interactions between DnaJ, DnaK and GrpE are required for fully efficient folding. The chain is Protein GrpE from Bacteroides thetaiotaomicron (strain ATCC 29148 / DSM 2079 / JCM 5827 / CCUG 10774 / NCTC 10582 / VPI-5482 / E50).